Consider the following 673-residue polypeptide: Translation factor GUF1 homolog, mitochondrial (673 aa).

The 193-residue stretch at 68-260 folds into the tr-type G domain; that stretch reads ERIRNFSIIA…AVIERIPSPP (193 aa). GTP-binding positions include 77–84, 153–157, and 207–210; these read AHVDHGKS, DTPGH, and NKID.

Belongs to the TRAFAC class translation factor GTPase superfamily. Classic translation factor GTPase family. LepA subfamily.

Its subcellular location is the mitochondrion inner membrane. The enzyme catalyses GTP + H2O = GDP + phosphate + H(+). Its function is as follows. Promotes mitochondrial protein synthesis. May act as a fidelity factor of the translation reaction, by catalyzing a one-codon backward translocation of tRNAs on improperly translocated ribosomes. Binds to mitochondrial ribosomes in a GTP-dependent manner. The protein is Translation factor GUF1 homolog, mitochondrial of Ricinus communis (Castor bean).